The sequence spans 366 residues: MQYKSQNFSHSQNPKTGVLLVNLGTPAAPTAKALKPYLKQFLSDPRVVEFPRLLWWLILNGIILNVRPRKSAAAYAKVWTERGSPLAIHTADQASALNVRLQRRFDDQVVVAWAMRYGSPSMADVQQSLFDQGVQQLLVIPLYPQYSAATTGSTFDALSADFQRRRWLPALRFVNQYHDNPGYIAALAERVRQHWQNNGRADKLILSYHGVPLRYLHAGDPYHCQCLATSRLLAEALQLTESEVITSFQSRFGREEWLQPYTDVLLKQLPGAGVKSVQIMCPGFSSDCLETIEEIGEENREYFLQNGGENYQYIPALNAGEDHIDVLEQLVLDNLQGWSLAPTAKRELEQRQQRADSCPFNQTKKL.

Fe cation-binding residues include histidine 209 and glutamate 290.

This sequence belongs to the ferrochelatase family.

The protein resides in the cytoplasm. The catalysed reaction is heme b + 2 H(+) = protoporphyrin IX + Fe(2+). Its pathway is porphyrin-containing compound metabolism; protoheme biosynthesis; protoheme from protoporphyrin-IX: step 1/1. In terms of biological role, catalyzes the ferrous insertion into protoporphyrin IX. The polypeptide is Ferrochelatase (Teredinibacter turnerae (strain ATCC 39867 / T7901)).